A 177-amino-acid polypeptide reads, in one-letter code: Large ribosomal subunit protein uL6 (177 aa).

The protein belongs to the universal ribosomal protein uL6 family. As to quaternary structure, part of the 50S ribosomal subunit.

Its function is as follows. This protein binds to the 23S rRNA, and is important in its secondary structure. It is located near the subunit interface in the base of the L7/L12 stalk, and near the tRNA binding site of the peptidyltransferase center. This chain is Large ribosomal subunit protein uL6, found in Haemophilus ducreyi (strain 35000HP / ATCC 700724).